Consider the following 729-residue polypeptide: Transketolase (729 aa).

H97 serves as a coordination point for substrate. Thiamine diphosphate-binding positions include H138 and 186 to 188 (GPL). Residue D227 coordinates Mg(2+). Residues G228 and N257 each contribute to the thiamine diphosphate site. Mg(2+)-binding residues include N257 and I259. Positions 332, 423, and 450 each coordinate substrate. A thiamine diphosphate-binding site is contributed by H332. Catalysis depends on E477, which acts as the Proton donor. Position 503 (F503) interacts with thiamine diphosphate. H527, D535, and R586 together coordinate substrate.

It belongs to the transketolase family. Homodimer. The cofactor is Mg(2+). Ca(2+) is required as a cofactor. Mn(2+) serves as cofactor. It depends on Co(2+) as a cofactor. Requires thiamine diphosphate as cofactor.

It catalyses the reaction D-sedoheptulose 7-phosphate + D-glyceraldehyde 3-phosphate = aldehydo-D-ribose 5-phosphate + D-xylulose 5-phosphate. Catalyzes the transfer of a two-carbon ketol group from a ketose donor to an aldose acceptor, via a covalent intermediate with the cofactor thiamine pyrophosphate. This chain is Transketolase, found in Streptococcus pyogenes serotype M6 (strain ATCC BAA-946 / MGAS10394).